Consider the following 304-residue polypeptide: D-alanine--D-alanine ligase (304 aa).

The ATP-grasp domain maps to 104–299 (KMVWLSCGLP…FEALCLAILA (196 aa)). 130-185 (ARDLGLPIFVKPVHEGSSMGATKVTEAGQLRAAWELAARYDSLVIAEEFISGQELT) contacts ATP. Mg(2+) is bound by residues D253, E266, and N268.

Belongs to the D-alanine--D-alanine ligase family. Requires Mg(2+) as cofactor. Mn(2+) serves as cofactor.

It is found in the cytoplasm. It carries out the reaction 2 D-alanine + ATP = D-alanyl-D-alanine + ADP + phosphate + H(+). It participates in cell wall biogenesis; peptidoglycan biosynthesis. Its function is as follows. Cell wall formation. This is D-alanine--D-alanine ligase from Azoarcus sp. (strain BH72).